We begin with the raw amino-acid sequence, 858 residues long: Leucine--tRNA ligase (858 aa).

A 'HIGH' region motif is present at residues 42–52 (PYPSGRLHMGH). The short motif at 618 to 622 (KMSKS) is the 'KMSKS' region element. K621 contributes to the ATP binding site.

It belongs to the class-I aminoacyl-tRNA synthetase family.

The protein localises to the cytoplasm. It catalyses the reaction tRNA(Leu) + L-leucine + ATP = L-leucyl-tRNA(Leu) + AMP + diphosphate. The protein is Leucine--tRNA ligase of Aliivibrio salmonicida (strain LFI1238) (Vibrio salmonicida (strain LFI1238)).